We begin with the raw amino-acid sequence, 393 residues long: Probable acetyl-CoA acetyltransferase (393 aa).

The Acyl-thioester intermediate role is filled by Cys-88. Active-site proton acceptor residues include His-349 and Cys-379.

Belongs to the thiolase-like superfamily. Thiolase family.

The enzyme catalyses 2 acetyl-CoA = acetoacetyl-CoA + CoA. This is Probable acetyl-CoA acetyltransferase (fadA4) from Mycobacterium leprae (strain TN).